A 309-amino-acid chain; its full sequence is Mitochondrial brown fat uncoupling protein 1 (309 aa).

Over 2 to 10 (VGHTESDVP) the chain is Mitochondrial intermembrane. A helical membrane pass occupies residues 11 to 32 (PTMAVKIFSAGVAACVADIITF). 3 Solcar repeats span residues 11-106 (PTMA…VQEF), 113-203 (ASLG…MKEA), and 212-297 (DDVP…LKQE). Residues 33-77 (PLDTAKVRLQVGSAIQGECLISSAIRYKGVLGTIITLAKTEGPVK) are Mitochondrial matrix-facing. Position 60 (lysine 60) interacts with fatty acid 16:0. The helical transmembrane segment at 78–100 (LYSGLPAGLQRQISFASLRIGLY) threads the bilayer. Residues 101–118 (DTVQEFFTTGKEASLGSK) are Mitochondrial intermembrane-facing. A helical transmembrane segment spans residues 119 to 135 (ISAGLMTGGVAVFIGQP). At 136–180 (TEVVKVRLQAQSHLHGPKPRYTGTYNAYRIIATTEGLTGLWKGTT) the chain is on the mitochondrial matrix side. A helical membrane pass occupies residues 181-197 (PNLTRNVIINCTELVTY). At 198 to 214 (DLMKEALVKNKLLADDV) the chain is on the mitochondrial intermembrane side. A helical membrane pass occupies residues 215 to 234 (PCHFVSAVVAGFCTTVLSSP). Over 235-268 (VDVVKTRFVNSSPGQYTSVPNCAMMMLTREGPSA) the chain is Mitochondrial matrix. Cysteine 256 is modified (cysteine sulfenic acid (-SOH)). The chain crosses the membrane as a helical span at residues 269–291 (FFKGFVPSFLRLGSWNIIMFVCF). Lysine 271 contacts fatty acid 16:0. The Mitochondrial intermembrane segment spans residues 292 to 309 (EQLKQELMKSRHTMDCAT).

The protein belongs to the mitochondrial carrier (TC 2.A.29) family. In terms of assembly, most probably functions as a monomer. Binds one purine nucleotide per monomer. However, has also been suggested to function as a homodimer or a homotetramer. Tightly associates with cardiolipin in the mitochondrion inner membrane; may stabilize and regulate its activity. Post-translationally, may undergo sulfenylation upon cold exposure. May increase the sensitivity of UCP1 thermogenic function to the activation by noradrenaline probably through structural effects. In terms of processing, may undergo ubiquitin-mediated proteasomal degradation.

It is found in the mitochondrion inner membrane. The enzyme catalyses H(+)(in) = H(+)(out). Has no constitutive proton transporter activity and has to be activated by long-chain fatty acids/LCFAs. Inhibited by purine nucleotides. Both purine nucleotides and LCFAs bind the cytosolic side of the transporter and directly compete to activate or inhibit it. Activated by noradrenaline and reactive oxygen species. Despite lacking canonical translational encoding for selenocysteine, a small pool of the protein has been observed to selectively incorporate selenocysteine at 'Cys-256'. Selenocysteine-modified protein is highly sensitive to redox modification and may constitute a pool of protein highly sensitive to activation by elevated levels of reactive oxygen species (ROS). In terms of biological role, mitochondrial protein responsible for thermogenic respiration, a specialized capacity of brown adipose tissue and beige fat that participates in non-shivering adaptive thermogenesis to temperature and diet variations and more generally to the regulation of energy balance. Functions as a long-chain fatty acid/LCFA and proton symporter, simultaneously transporting one LCFA and one proton through the inner mitochondrial membrane. However, LCFAs remaining associated with the transporter via their hydrophobic tails, it results in an apparent transport of protons activated by LCFAs. Thereby, dissipates the mitochondrial proton gradient and converts the energy of substrate oxydation into heat instead of ATP. Regulates the production of reactive oxygen species/ROS by mitochondria. The polypeptide is Mitochondrial brown fat uncoupling protein 1 (Bos taurus (Bovine)).